The primary structure comprises 99 residues: Co-chaperonin GroES (99 aa).

Belongs to the GroES chaperonin family. As to quaternary structure, heptamer of 7 subunits arranged in a ring. Interacts with the chaperonin GroEL.

It is found in the cytoplasm. Its function is as follows. Together with the chaperonin GroEL, plays an essential role in assisting protein folding. The GroEL-GroES system forms a nano-cage that allows encapsulation of the non-native substrate proteins and provides a physical environment optimized to promote and accelerate protein folding. GroES binds to the apical surface of the GroEL ring, thereby capping the opening of the GroEL channel. This Corynebacterium glutamicum (strain R) protein is Co-chaperonin GroES.